A 355-amino-acid polypeptide reads, in one-letter code: Protein RecA (355 aa).

69–76 (GPESSGKT) contributes to the ATP binding site. Residues 329 to 355 (AYGLPDREETKREETAQIPDTEKTKDV) form a disordered region.

This sequence belongs to the RecA family.

It is found in the cytoplasm. In terms of biological role, can catalyze the hydrolysis of ATP in the presence of single-stranded DNA, the ATP-dependent uptake of single-stranded DNA by duplex DNA, and the ATP-dependent hybridization of homologous single-stranded DNAs. It interacts with LexA causing its activation and leading to its autocatalytic cleavage. This Desulfotalea psychrophila (strain LSv54 / DSM 12343) protein is Protein RecA.